Reading from the N-terminus, the 321-residue chain is L-lactate dehydrogenase (321 aa).

Residues Val-19, Asp-40, Lys-45, Tyr-71, and 85–86 (GA) contribute to the NAD(+) site. Residues Gln-88, Arg-94, and 126–129 (NPVD) each bind substrate. NAD(+) is bound by residues 124–126 (ATN) and Ser-149. 154-157 (DTAR) serves as a coordination point for substrate. Positions 159 and 174 each coordinate beta-D-fructose 1,6-bisphosphate. His-181 (proton acceptor) is an active-site residue. The residue at position 226 (Tyr-226) is a Phosphotyrosine. Position 235 (Thr-235) interacts with substrate.

This sequence belongs to the LDH/MDH superfamily. LDH family. Homotetramer.

The protein resides in the cytoplasm. It catalyses the reaction (S)-lactate + NAD(+) = pyruvate + NADH + H(+). The protein operates within fermentation; pyruvate fermentation to lactate; (S)-lactate from pyruvate: step 1/1. With respect to regulation, allosterically activated by fructose 1,6-bisphosphate (FBP). Catalyzes the conversion of lactate to pyruvate. The sequence is that of L-lactate dehydrogenase from Oceanobacillus iheyensis (strain DSM 14371 / CIP 107618 / JCM 11309 / KCTC 3954 / HTE831).